A 163-amino-acid polypeptide reads, in one-letter code: UPF0478 protein SERP1299 (163 aa).

Residues isoleucine 7 to leucine 27 form a helical membrane-spanning segment.

Belongs to the UPF0478 family.

Its subcellular location is the cell membrane. This is UPF0478 protein SERP1299 from Staphylococcus epidermidis (strain ATCC 35984 / DSM 28319 / BCRC 17069 / CCUG 31568 / BM 3577 / RP62A).